Here is a 261-residue protein sequence, read N- to C-terminus: Hydroxyethylthiazole kinase (261 aa).

Met-40 is a binding site for substrate. Residues Lys-116 and Thr-162 each coordinate ATP. Gly-189 provides a ligand contact to substrate.

This sequence belongs to the Thz kinase family. It depends on Mg(2+) as a cofactor.

The catalysed reaction is 5-(2-hydroxyethyl)-4-methylthiazole + ATP = 4-methyl-5-(2-phosphooxyethyl)-thiazole + ADP + H(+). The protein operates within cofactor biosynthesis; thiamine diphosphate biosynthesis; 4-methyl-5-(2-phosphoethyl)-thiazole from 5-(2-hydroxyethyl)-4-methylthiazole: step 1/1. Catalyzes the phosphorylation of the hydroxyl group of 4-methyl-5-beta-hydroxyethylthiazole (THZ). This is Hydroxyethylthiazole kinase from Methanosarcina acetivorans (strain ATCC 35395 / DSM 2834 / JCM 12185 / C2A).